The primary structure comprises 81 residues: uncharacterized protein (81 aa).

To Synechocystis PCC 6803 ssr2439.

May have a regulatory function. This is an uncharacterized protein from Synechococcus elongatus (strain ATCC 33912 / PCC 7942 / FACHB-805) (Anacystis nidulans R2).